The primary structure comprises 837 residues: Periplasmic nitrate reductase (837 aa).

The segment at residues M1–A33 is a signal peptide (tat-type signal). The region spanning L44–D100 is the 4Fe-4S Mo/W bis-MGD-type domain. Positions 51, 54, 58, and 86 each coordinate [4Fe-4S] cluster. Residues K88, Q155, N180, C184, W217–M224, S248–H252, Q267–D269, M378, Q382, N488, S514–D515, K537, D564, and T724–S733 each bind Mo-bis(molybdopterin guanine dinucleotide). W800 contributes to the substrate binding site. Positions 808 and 825 each coordinate Mo-bis(molybdopterin guanine dinucleotide).

The protein belongs to the prokaryotic molybdopterin-containing oxidoreductase family. NasA/NapA/NarB subfamily. Component of the periplasmic nitrate reductase NapAB complex composed of NapA and NapB. It depends on [4Fe-4S] cluster as a cofactor. The cofactor is Mo-bis(molybdopterin guanine dinucleotide). Post-translationally, predicted to be exported by the Tat system. The position of the signal peptide cleavage has not been experimentally proven.

The protein localises to the periplasm. It catalyses the reaction 2 Fe(II)-[cytochrome] + nitrate + 2 H(+) = 2 Fe(III)-[cytochrome] + nitrite + H2O. Functionally, catalytic subunit of the periplasmic nitrate reductase complex NapAB. Receives electrons from NapB and catalyzes the reduction of nitrate to nitrite. The protein is Periplasmic nitrate reductase of Rhodopseudomonas palustris (strain BisB18).